Consider the following 421-residue polypeptide: UDP-N-acetylglucosamine 1-carboxyvinyltransferase (421 aa).

A phosphoenolpyruvate-binding site is contributed by 22-23 (KN). Residue Arg92 coordinates UDP-N-acetyl-alpha-D-glucosamine. Cys116 serves as the catalytic Proton donor. Cys116 bears the 2-(S-cysteinyl)pyruvic acid O-phosphothioketal mark. Residues Asp306 and Val328 each coordinate UDP-N-acetyl-alpha-D-glucosamine.

Belongs to the EPSP synthase family. MurA subfamily.

It is found in the cytoplasm. It catalyses the reaction phosphoenolpyruvate + UDP-N-acetyl-alpha-D-glucosamine = UDP-N-acetyl-3-O-(1-carboxyvinyl)-alpha-D-glucosamine + phosphate. Its pathway is cell wall biogenesis; peptidoglycan biosynthesis. Functionally, cell wall formation. Adds enolpyruvyl to UDP-N-acetylglucosamine. This is UDP-N-acetylglucosamine 1-carboxyvinyltransferase from Thermotoga maritima (strain ATCC 43589 / DSM 3109 / JCM 10099 / NBRC 100826 / MSB8).